The sequence spans 486 residues: MITTEIKRVKNHINGEWVESTGTEVEAVPNPATGKIIAYVPLSPKEDVEKAVEAAKAAYETWSKVPVPNRSRQLYKYLQLLQENKEELAKIITLENGKTLTDATGEVQRGIEAVELATSTPNLMMGQALPNIASGIDGSIWRYPIGVVAGITPFNFPMMIPLWMFPLAIACGNTFVLKTSERTPLLAERLVELFYEAGFPKGVLNLVQGGKDVVNSILENKDIQAVSFVGSEPVARYVYETGTKHGKRVQALAGAKNHAIVMPDCNLEKTVQGVIGSAFASSGERCMACSVVAVVDEIADEFIDVLVAETKKLKVGDGFHEDNYVGPLIRESHKERVLGYINSGVADGATLLVDGRKIKEEVGDGYFVGATIFDGVNQEMKIWQDEIFAPVLSIVRVKDLEEGIKLTNQSKFANGAVIYTSNGKHAQTFRDNIDAGMIGVNVNVPAPMAFFAFAGNKASFFGDLGTNGTDGVQFYTRKKVVTERWF.

Residues phenylalanine 154, lysine 178, glutamate 181, arginine 182, and serine 231 each contribute to the NAD(+) site. Catalysis depends on cysteine 286, which acts as the Nucleophile. Glutamate 386 contacts NAD(+).

Belongs to the aldehyde dehydrogenase family. IolA subfamily. As to quaternary structure, homotetramer.

The catalysed reaction is 3-oxopropanoate + NAD(+) + CoA + H2O = hydrogencarbonate + acetyl-CoA + NADH + H(+). It catalyses the reaction 2-methyl-3-oxopropanoate + NAD(+) + CoA + H2O = propanoyl-CoA + hydrogencarbonate + NADH + H(+). It functions in the pathway polyol metabolism; myo-inositol degradation into acetyl-CoA; acetyl-CoA from myo-inositol: step 7/7. In terms of biological role, catalyzes the oxidation of malonate semialdehyde (MSA) and methylmalonate semialdehyde (MMSA) into acetyl-CoA and propanoyl-CoA, respectively. Is involved in a myo-inositol catabolic pathway. Bicarbonate, and not CO2, is the end-product of the enzymatic reaction. The protein is Malonate-semialdehyde dehydrogenase of Bacillus cereus (strain ATCC 10987 / NRS 248).